The following is a 98-amino-acid chain: Small ribosomal subunit protein uS19 (98 aa).

Belongs to the universal ribosomal protein uS19 family.

Functionally, protein S19 forms a complex with S13 that binds strongly to the 16S ribosomal RNA. This Chlorobaculum tepidum (strain ATCC 49652 / DSM 12025 / NBRC 103806 / TLS) (Chlorobium tepidum) protein is Small ribosomal subunit protein uS19.